The primary structure comprises 259 residues: MLKELRQKRPLVHNITNYVVAQFVANGLLALGASPLMSDAIAEMQDLAKISDALAINIGTLNERTILCAKEAIKHYKALNKPIVLDPVGCSASALRHGTSLELLESEGISVLRGNAAELGSLVGISCGSKGLDSHYATTPIEIVKLVAQKYSVIAVMTGKTDYVSDGKKVFSITGGSEYLALITGAGCLHAAACASFLSLRKDPLDSMAQLCALYKQAAFNAQKKVSENNGSNGSFLFYFLDALSLPIKLENSLIKEEL.

Methionine 37 lines the substrate pocket. Arginine 113 and threonine 158 together coordinate ATP. Glycine 185 is a binding site for substrate.

It belongs to the Thz kinase family. It depends on Mg(2+) as a cofactor.

It carries out the reaction 5-(2-hydroxyethyl)-4-methylthiazole + ATP = 4-methyl-5-(2-phosphooxyethyl)-thiazole + ADP + H(+). It functions in the pathway cofactor biosynthesis; thiamine diphosphate biosynthesis; 4-methyl-5-(2-phosphoethyl)-thiazole from 5-(2-hydroxyethyl)-4-methylthiazole: step 1/1. Functionally, catalyzes the phosphorylation of the hydroxyl group of 4-methyl-5-beta-hydroxyethylthiazole (THZ). The sequence is that of Hydroxyethylthiazole kinase from Helicobacter pylori (strain Shi470).